The primary structure comprises 89 residues: Small ribosomal subunit protein uS15 (89 aa).

The protein belongs to the universal ribosomal protein uS15 family. In terms of assembly, part of the 30S ribosomal subunit. Forms a bridge to the 50S subunit in the 70S ribosome, contacting the 23S rRNA.

In terms of biological role, one of the primary rRNA binding proteins, it binds directly to 16S rRNA where it helps nucleate assembly of the platform of the 30S subunit by binding and bridging several RNA helices of the 16S rRNA. Forms an intersubunit bridge (bridge B4) with the 23S rRNA of the 50S subunit in the ribosome. The protein is Small ribosomal subunit protein uS15 of Synechocystis sp. (strain ATCC 27184 / PCC 6803 / Kazusa).